We begin with the raw amino-acid sequence, 263 residues long: tRNA (guanine-N(7)-)-methyltransferase (263 aa).

Positions 1–39 are disordered; that stretch reads MVHHGQMHAQPGVGLRPDTPVASGQLPSTSIRSRRSGIS. The S-adenosyl-L-methionine site is built by glutamate 82, aspartate 107, asparagine 136, and aspartate 159. Aspartate 159 is a catalytic residue. Residues lysine 163, aspartate 195, and 232-235 contribute to the substrate site; that span reads TKYE.

This sequence belongs to the class I-like SAM-binding methyltransferase superfamily. TrmB family.

It carries out the reaction guanosine(46) in tRNA + S-adenosyl-L-methionine = N(7)-methylguanosine(46) in tRNA + S-adenosyl-L-homocysteine. Its pathway is tRNA modification; N(7)-methylguanine-tRNA biosynthesis. Its function is as follows. Catalyzes the formation of N(7)-methylguanine at position 46 (m7G46) in tRNA. This chain is tRNA (guanine-N(7)-)-methyltransferase, found in Mycobacterium bovis (strain ATCC BAA-935 / AF2122/97).